Here is a 636-residue protein sequence, read N- to C-terminus: MHLSEITHPNQLHGLSVAQLEQIGHQIREKHLQTVAATGGHLGPGLGVVELTLALYQTLDLDRDKVVWDVGHQAYPHKLLTGRYHNFHTLRQKDGIAGYLKRTENRFDHFGAGHASTSISAALGMALARDAQGEDYRCVAVIGDGSLTGGMALEAINHAGHLPKTRLLVVLNDNDMSISPNVGALSRYLNKIRVSEPMQLLTDGLTQGMQQIPFVGGAITQGFEPVKEGMKRLSYSKIGAVFEELGFTYMGPVDGHNLEELIATFREAHKHTGPVLVHVATTKGKGYPYAEEDQVGYHAQNPFDLATGKAKPASKPKPPSYSKVFGQTLTTLAKSDRRIVGITAAMATGTGLDILQKALPKQYIDVGIAEQHAVVLAAGMACDGMRPVVAIYSTFLQRAFDQVIHDVCIQKLPVFFCLDRAGIVGADGPTHQGMYDIAYLRLIPNMVLMAPKDEAELQRMLVTGIEYDGPIAMRFPRGNGIGVPLPEEGWESLPIGKAEQLRQGDDLLMLAYGSMVYPALQTAELLNEHGISATVINARFAKPLDEELIVPLARQIGKVVTFEEGCLPGGFGSAIMESLQAHDLQVPVLPIGVPDLLVEHASPDESKQELGLTPRQMADRILEKFGSRQRIGAASA.

Thiamine diphosphate contacts are provided by residues His-72 and 113 to 115 (GHA). Position 144 (Asp-144) interacts with Mg(2+). Residues 145–146 (GS), Asn-174, Tyr-287, and Glu-370 each bind thiamine diphosphate. Asn-174 contributes to the Mg(2+) binding site.

The protein belongs to the transketolase family. DXPS subfamily. Homodimer. Mg(2+) is required as a cofactor. The cofactor is thiamine diphosphate.

The enzyme catalyses D-glyceraldehyde 3-phosphate + pyruvate + H(+) = 1-deoxy-D-xylulose 5-phosphate + CO2. It participates in metabolic intermediate biosynthesis; 1-deoxy-D-xylulose 5-phosphate biosynthesis; 1-deoxy-D-xylulose 5-phosphate from D-glyceraldehyde 3-phosphate and pyruvate: step 1/1. In terms of biological role, catalyzes the acyloin condensation reaction between C atoms 2 and 3 of pyruvate and glyceraldehyde 3-phosphate to yield 1-deoxy-D-xylulose-5-phosphate (DXP). This is 1-deoxy-D-xylulose-5-phosphate synthase from Synechococcus elongatus (strain ATCC 33912 / PCC 7942 / FACHB-805) (Anacystis nidulans R2).